The sequence spans 188 residues: Inosine triphosphate pyrophosphatase (188 aa).

ITP is bound at residue 11 to 16; that stretch reads TGNKHK. A Mg(2+)-binding site is contributed by glutamate 39. Residues lysine 51, 67 to 68, lysine 84, 143 to 146, and 171 to 172 contribute to the ITP site; these read DT, FGWN, and HR.

It belongs to the HAM1 NTPase family. In terms of assembly, homodimer. Mg(2+) serves as cofactor. The cofactor is Mn(2+).

Its subcellular location is the cytoplasm. It localises to the nucleus. It catalyses the reaction ITP + H2O = IMP + diphosphate + H(+). The enzyme catalyses dITP + H2O = dIMP + diphosphate + H(+). The catalysed reaction is XTP + H2O = XMP + diphosphate + H(+). In terms of biological role, pyrophosphatase that hydrolyzes non-canonical purine nucleotides such as inosine triphosphate (ITP), deoxyinosine triphosphate (dITP) or xanthosine 5'-triphosphate (XTP) to their respective monophosphate derivatives. The enzyme does not distinguish between the deoxy- and ribose forms. Probably excludes non-canonical purines from RNA and DNA precursor pools, thus preventing their incorporation into RNA and DNA and avoiding chromosomal lesions. This is Inosine triphosphate pyrophosphatase from Schizosaccharomyces pombe (strain 972 / ATCC 24843) (Fission yeast).